The chain runs to 229 residues: Heptaprenylglyceryl phosphate synthase (229 aa).

Sn-glycerol 1-phosphate is bound at residue K12. D14 and S40 together coordinate Mg(2+). Sn-glycerol 1-phosphate is bound by residues 159–164 (YLEYSG), G189, and 209–210 (GN).

Belongs to the GGGP/HepGP synthase family. Group I subfamily. In terms of assembly, homodimer. Requires Mg(2+) as cofactor.

The catalysed reaction is sn-glycerol 1-phosphate + all-trans-heptaprenyl diphosphate = 3-heptaprenyl-sn-glycero-1-phosphate + diphosphate. It participates in membrane lipid metabolism; glycerophospholipid metabolism. Prenyltransferase that catalyzes in vivo the transfer of the heptaprenyl moiety of heptaprenyl pyrophosphate (HepPP; 35 carbon atoms) to the C3 hydroxyl of sn-glycerol-1-phosphate (G1P), producing heptaprenylglyceryl phosphate (HepGP). This reaction is an ether-bond-formation step in the biosynthesis of archaea-type G1P-based membrane lipids found in Bacillales. In Bacillus cereus (strain ATCC 14579 / DSM 31 / CCUG 7414 / JCM 2152 / NBRC 15305 / NCIMB 9373 / NCTC 2599 / NRRL B-3711), this protein is Heptaprenylglyceryl phosphate synthase.